Reading from the N-terminus, the 178-residue chain is Inner membrane-spanning protein YciB (178 aa).

6 helical membrane passes run 1–21, 23–43, 51–71, 77–97, 120–140, and 150–170; these read MKIL…KMTG, IIIA…FTWF, MHLV…LLGD, WKPT…QFIG, LNLA…YVAF, and FKLF…GIYL.

The protein belongs to the YciB family.

It localises to the cell inner membrane. Plays a role in cell envelope biogenesis, maintenance of cell envelope integrity and membrane homeostasis. The sequence is that of Inner membrane-spanning protein YciB from Marinomonas sp. (strain MWYL1).